The chain runs to 144 residues: Protein WAP-3 (144 aa).

An N-terminal signal peptide occupies residues 1–21 (MRSRSFLVLVAVFLICETLVA). The segment at 28–49 (RGPKGQGQDPVEGQDQDEGQGP) is disordered. A region of interest (8 X 6 AA approximate tandem repeats) is located at residue G34. 8 repeat units span residues 34–39 (GQDPVE), 40–45 (GQDQDE), 46–51 (GQGPVK), 58–63 (GQDLVK), 64–69 (GQDPVE), 70–75 (GQDPVK), 76–81 (AQLPDK), and 82–87 (VQDPVK). The interval 64–85 (GQDPVEGQDPVKAQLPDKVQDP) is disordered. Positions 97-144 (LFPKPGVCPKIIFCPLVNPPIKCWRDSHCPGVKKCCPSLCGKGCVTPR) constitute a WAP domain. Disulfide bonds link C104–C132, C110–C136, C119–C131, and C125–C140.

In terms of tissue distribution, large intestine (relatively low levels).

This Sus scrofa (Pig) protein is Protein WAP-3.